Consider the following 176-residue polypeptide: Prepronociceptin (176 aa).

Residues M1–S19 form the signal peptide. 2 propeptides span residues S20–L95 and T169–A176.

It belongs to the opioid neuropeptide precursor family. Post-translationally, specific enzymatic cleavages at paired basic residues probably yield other active peptides besides nociceptin. The N-terminal domain contains 6 conserved cysteines thought to be involved in disulfide bonding and/or processing.

It is found in the secreted. Its function is as follows. Ligand of the opioid receptor-like receptor OPRL1. It may act as a transmitter in the brain by modulating nociceptive and locomotor behavior. May be involved in neuronal differentiation and development. Functionally, blocks nociceptin action in pain transmission by inhibiting nociceptin-induced hyperalgesia and allodynia. In terms of biological role, has potent analgesic activity. This chain is Prepronociceptin (PNOC), found in Bos taurus (Bovine).